The primary structure comprises 358 residues: Pyruvate dehydrogenase E1 component subunit alpha (358 aa).

Heterodimer of an alpha and a beta chain. Thiamine diphosphate serves as cofactor.

The catalysed reaction is N(6)-[(R)-lipoyl]-L-lysyl-[protein] + pyruvate + H(+) = N(6)-[(R)-S(8)-acetyldihydrolipoyl]-L-lysyl-[protein] + CO2. Functionally, the pyruvate dehydrogenase complex catalyzes the overall conversion of pyruvate to acetyl-CoA and CO(2). It contains multiple copies of three enzymatic components: pyruvate dehydrogenase (E1), dihydrolipoamide acetyltransferase (E2) and lipoamide dehydrogenase (E3). The sequence is that of Pyruvate dehydrogenase E1 component subunit alpha (pdhA) from Mycoplasma genitalium (strain ATCC 33530 / DSM 19775 / NCTC 10195 / G37) (Mycoplasmoides genitalium).